Consider the following 238-residue polypeptide: Purine nucleoside phosphorylase DeoD-type (238 aa).

Residue H4 participates in a purine D-ribonucleoside binding. Phosphate-binding positions include G20, R24, R43, and 87–90 (RVGS). Residues 179–181 (EME) and 203–204 (SD) contribute to the a purine D-ribonucleoside site. D204 (proton donor) is an active-site residue.

Belongs to the PNP/UDP phosphorylase family. In terms of assembly, homohexamer; trimer of homodimers.

The enzyme catalyses a purine D-ribonucleoside + phosphate = a purine nucleobase + alpha-D-ribose 1-phosphate. It catalyses the reaction a purine 2'-deoxy-D-ribonucleoside + phosphate = a purine nucleobase + 2-deoxy-alpha-D-ribose 1-phosphate. Its function is as follows. Catalyzes the reversible phosphorolytic breakdown of the N-glycosidic bond in the beta-(deoxy)ribonucleoside molecules, with the formation of the corresponding free purine bases and pentose-1-phosphate. In Pasteurella multocida (strain Pm70), this protein is Purine nucleoside phosphorylase DeoD-type.